The sequence spans 490 residues: MSRMAEQQLYIHGGYTSATSGHTFETINPANGNVLATVQAAGREDVDRAVKSAQQGQKIWAAMTAMERSRILRRAVDILRERNDELAKLETLDTGKAYSETSTVDIVTGADVLEYYAGLIPSLEGSQIPLRETSFVYTRREPLGVVAGIGAWNYPIQIALWKSAPALAAGNAMIFKPSEVTPLTALKLAEIYSEAGLPDGVFNVLPGVGAETGQYLTEHPGIAKVSFTGGVASGKKVMANSAASSLKEVTMELGGKSPLIVFDDADLELAADIAMMANFFSSGQVCTNGTRVFVPAKCKAAFEQKILARVERIRADDVFDPQTNFGPLVSFPHRDNVLRYIAKGKEEGARVLCGGDVLKGDGFDNGAWVAPTVFTDCSDDMTIVREEIFGPVMSILIYESEDEVIRRANDTDYGLAAGIVTADLNRAHRVIHQLEAGICWINTWGESPAEMPVGGYKHSGIGRENGVMTLQSYTQVKSIQVEMAKFQSIF.

Positions 26, 27, and 93 each coordinate K(+). An NAD(+)-binding site is contributed by 150-152 (GAW). Catalysis depends on Lys-162, which acts as the Charge relay system. 176 to 179 (KPSE) is a binding site for NAD(+). Val-180 contacts K(+). NAD(+) is bound at residue 230 to 233 (GVAS). Leu-246 is a binding site for K(+). Glu-252 acts as the Proton acceptor in catalysis. Residues Gly-254, Cys-286, and Glu-387 each contribute to the NAD(+) site. Cys-286 (nucleophile) is an active-site residue. Cys-286 is modified (cysteine sulfenic acid (-SOH)). The K(+) site is built by Lys-457 and Gly-460. Glu-464 functions as the Charge relay system in the catalytic mechanism.

The protein belongs to the aldehyde dehydrogenase family. As to quaternary structure, dimer of dimers. K(+) serves as cofactor.

The enzyme catalyses betaine aldehyde + NAD(+) + H2O = glycine betaine + NADH + 2 H(+). Its pathway is amine and polyamine biosynthesis; betaine biosynthesis via choline pathway; betaine from betaine aldehyde: step 1/1. Functionally, involved in the biosynthesis of the osmoprotectant glycine betaine. Catalyzes the irreversible oxidation of betaine aldehyde to the corresponding acid. The chain is Betaine aldehyde dehydrogenase from Escherichia coli O6:K15:H31 (strain 536 / UPEC).